The chain runs to 807 residues: F-box protein YLR352W (807 aa).

The F-box domain occupies 220–266 (LNDCIDLPSHVLWKILKMLPELQKLDLSHTSIDDSTLYHGIPHWKNL). A compositionally biased stretch (basic and acidic residues) spans 607-616 (DNNSHVEDSQ). Disordered regions lie at residues 607 to 647 (DNNS…NPFA) and 716 to 739 (HLFESSRSRSGNKTRPSLTGEHSS). Composition is skewed to polar residues over residues 627 to 644 (SLLSRPTLRSNNGSSSAN) and 723 to 736 (SRSGNKTRPSLTGE).

In terms of assembly, interacts with SKP1 and CDC53. Component of the probable SCF(YBR352W) complex containing CDC53, SKP1, RBX1 and YBR352W.

Its pathway is protein modification; protein ubiquitination. Substrate recognition component of a SCF (SKP1-CUL1-F-box protein) E3 ubiquitin-protein ligase complex which mediates the ubiquitination and subsequent proteasomal degradation of target proteins. Probably recognizes and binds to phosphorylated target proteins. In Saccharomyces cerevisiae (strain ATCC 204508 / S288c) (Baker's yeast), this protein is F-box protein YLR352W.